A 341-amino-acid polypeptide reads, in one-letter code: Thymidine kinase (341 aa).

Position 19–26 (G19–T26) interacts with ATP. E48 (proton acceptor) is an active-site residue. Residues Y66 and Q90 each contribute to the substrate site. R183 serves as a coordination point for ATP. Position 189 (R189) interacts with substrate.

Belongs to the herpesviridae thymidine kinase family. As to quaternary structure, homodimer.

The catalysed reaction is thymidine + ATP = dTMP + ADP + H(+). Functionally, catalyzes the transfer of the gamma-phospho group of ATP to thymidine to generate dTMP in the salvage pathway of pyrimidine synthesis. The dTMP serves as a substrate for DNA polymerase during viral DNA replication. Allows the virus to be reactivated and to grow in non-proliferative cells lacking a high concentration of phosphorylated nucleic acid precursors. This Varicella-zoster virus (strain Oka vaccine) (HHV-3) protein is Thymidine kinase.